The primary structure comprises 211 residues: Protein-L-isoaspartate O-methyltransferase (211 aa).

Serine 60 is a catalytic residue.

It belongs to the methyltransferase superfamily. L-isoaspartyl/D-aspartyl protein methyltransferase family.

The protein resides in the cytoplasm. It catalyses the reaction [protein]-L-isoaspartate + S-adenosyl-L-methionine = [protein]-L-isoaspartate alpha-methyl ester + S-adenosyl-L-homocysteine. Its function is as follows. Catalyzes the methyl esterification of L-isoaspartyl residues in peptides and proteins that result from spontaneous decomposition of normal L-aspartyl and L-asparaginyl residues. It plays a role in the repair and/or degradation of damaged proteins. In Pseudomonas paraeruginosa (strain DSM 24068 / PA7) (Pseudomonas aeruginosa (strain PA7)), this protein is Protein-L-isoaspartate O-methyltransferase.